The primary structure comprises 497 residues: Alkene monooxygenase system, oxygenase component subunit alpha (497 aa).

Positions 104, 134, 137, 197, 231, and 234 each coordinate Fe cation.

It belongs to the TmoA/XamoA family. As to quaternary structure, the alkene monooxygenase multicomponent enzyme system is composed of an electron transfer component and a monooxygenase component interacting with the effector protein XamoD. The electron transfer component is composed of a ferredoxin reductase (XamoF) and a ferredoxin (XamoC), and the monooxygenase component is formed by a heterohexamer (dimer of heterotrimers) of two alpha subunits (XamoA), two beta subunits (XamoE) and two gamma subunits (XamoB). It depends on Fe(2+) as a cofactor.

The protein resides in the cytoplasm. It carries out the reaction propene + NADH + O2 + H(+) = 1,2-epoxypropane + NAD(+) + H2O. Its activity is regulated as follows. Inhibited by propyne. Component of the alkene monooxygenase multicomponent enzyme system which catalyzes the O2- and NADH-dependent epoxidation of short chain (C2 to C6) alkenes to their corresponding epoxides. Also able to catalyze the oxidation of a number of chlorinated alkenes, including trichloroethylene, cis- and trans-1,2-dichloroethylene, vinyl chloride, 1-chloropropylene, 1,3-dichloropropylene and 2,3-dichloropropylene. This is Alkene monooxygenase system, oxygenase component subunit alpha from Xanthobacter autotrophicus (strain ATCC BAA-1158 / Py2).